The primary structure comprises 61 residues: Temporin-CDYa (61 aa).

Positions 1 to 22 are cleaved as a signal peptide; it reads MFPLKKSLLLLFFLGTINFSFC. Residues 23-44 constitute a propeptide that is removed on maturation; it reads EEERNAEEERRDDPEERDVAME. Leu59 carries the post-translational modification Leucine amide.

This sequence belongs to the frog skin active peptide (FSAP) family. Temporin subfamily. As to expression, expressed by the skin glands.

Its subcellular location is the secreted. In terms of biological role, antimicrobial peptide. The polypeptide is Temporin-CDYa (Rana dybowskii (Dybovsky's frog)).